Reading from the N-terminus, the 487-residue chain is Probable nuclear hormone receptor HR3 (487 aa).

Positions 48–123 form a DNA-binding region, nuclear receptor; sequence IIPCKVCGDK…LGMSRDAVKF (76 aa). 2 NR C4-type zinc fingers span residues 51–71 and 87–111; these read CKVC…CEGC and CPRN…LQKC. The tract at residues 145–176 is disordered; that stretch reads MRAQSDAAPDSSVYDTQTPSSSDQLHHNNYNS. Polar residues predominate over residues 157–167; the sequence is VYDTQTPSSSD. The NR LBD domain maps to 237-480; that stretch reads INDVLIKTLA…PALYKELFSI (244 aa).

Belongs to the nuclear hormone receptor family. NR1 subfamily.

It is found in the nucleus. Functionally, putative receptor whose ligand is not yet known. The chain is Probable nuclear hormone receptor HR3 from Drosophila melanogaster (Fruit fly).